The primary structure comprises 424 residues: Histidine--tRNA ligase (424 aa).

Belongs to the class-II aminoacyl-tRNA synthetase family. In terms of assembly, homodimer.

It is found in the cytoplasm. The catalysed reaction is tRNA(His) + L-histidine + ATP = L-histidyl-tRNA(His) + AMP + diphosphate + H(+). The polypeptide is Histidine--tRNA ligase (Desulfitobacterium hafniense (strain DSM 10664 / DCB-2)).